We begin with the raw amino-acid sequence, 221 residues long: GTP-binding nuclear protein Ran-2 (221 aa).

Residues 10 to 174 form the Small GTPase Ran-type domain; sequence DYPSFKLVIV…LYLARKLAGD (165 aa). 21 to 28 contacts GTP; it reads DGGTGKTT. Positions 40 to 48 are switch-I; sequence KKYEPTIGV. GTP-binding positions include Gly71, 125–128, and 153–155; these read NKVD and SAK. The tract at residues 71–87 is switch-II; sequence GQEKFGGLRDGYYIHGQ. Residues 202–212 show a composition bias toward low complexity; it reads ADLAAAAAQPL. Residues 202–221 are disordered; the sequence is ADLAAAAAQPLPDDDDDAFE.

It belongs to the small GTPase superfamily. Ran family. As to quaternary structure, found in a nuclear export complex with RanGTP, exportin and pre-miRNA. Interacts with RanBP1a and RanBP1b. Interacts with PHRIP1. Interacts with KPNB1. Binds to PHIP1.

The protein resides in the nucleus. It is found in the nucleus envelope. Its function is as follows. GTP-binding protein involved in nucleocytoplasmic transport. Required for the import of protein into the nucleus and also for RNA export. Involved in chromatin condensation and control of cell cycle. The chain is GTP-binding nuclear protein Ran-2 from Arabidopsis thaliana (Mouse-ear cress).